Consider the following 671-residue polypeptide: Preterminal protein (671 aa).

Residues 380 to 389 (RLPVRRRRRR) carry the Nuclear localization signal motif. Residues 386-409 (RRRRVPPPPPPPEEEEEGEALMEE) are disordered. A compositionally biased stretch (acidic residues) spans 397 to 409 (PEEEEEGEALMEE). An O-(5'-phospho-DNA)-serine modification is found at Ser-580. Residues 645-671 (GADVPLPPLPAGPEPPLPPGARPRHRF) are disordered. Over residues 649 to 665 (PLPPLPAGPEPPLPPGA) the composition is skewed to pro residues.

It belongs to the adenoviridae terminal protein family. In terms of assembly, heterodimer with the polymerase; this heterodimer binds to bp 9 to 18 of the genome. Interacts with host POU2F1; POU2F1 binds to the auxiliary sequences in the inverted terminal repeats and tethers the pTP-POL heterodimer to the origin DNA thereby participating in the assembly of the pre-initiation complex (POL-TP-DBP-NFIA-POU2F1). In terms of processing, preterminal protein is used to replicate viral genome, upon genomic encapsidation it is processed first into iTP and finally into TP by adenovirus protease.

The protein localises to the host nucleus matrix. Protein covalently bound to the viral DNA that acts as a primer for viral genomic replication by DNA strand displacement. Assembles on the viral origin of replication in an initiation complex with viral polymerase, DBP, host NFIA and host POU2F1/OCT1. During initiation, the polymerase covalently couples the first dCTP with Ser-580 of pTP. The terminal protein stimulates the template activity over 20 fold compared to protein-free templates. Neo-synthesized viral genomes are linked to two preterminal proteins, one for each 5' end. These new genomes are encapsidated in the nucleus, and during capsid maturation by viral protease, preterminal protein is first cleaved into intermediary (iTP), then into mature TP. May play a role in host nuclear matrix localization of genomic DNA. This chain is Preterminal protein, found in Homo sapiens (Human).